A 387-amino-acid polypeptide reads, in one-letter code: EARP and GARP complex-interacting protein 1 (387 aa).

Position 1 is an N-acetylmethionine (Met-1). 4 WD repeats span residues 132-172 (TAHS…SQAV), 180-222 (GGKG…QIYC), 226-266 (AHGQ…EPVK), and 270-310 (EHSH…SEPF). The tract at residues 310-334 (FGHLVDDDDISDQEDHRSEEKSKEP) is disordered. The residue at position 320 (Ser-320) is a Phosphoserine. The segment covering 322–334 (QEDHRSEEKSKEP) has biased composition (basic and acidic residues). The WD 5 repeat unit spans residues 345 to 385 (EHEDSVYAVDWSSADPWLFASLSYDGRLVINRVPRALKYHI).

Belongs to the WD repeat EIPR1 family. Interacts with two multisubunit tethering complexes: EARP composed of VPS50, VPS51, VPS52 and VPS53 subunits and GARP complex composed of VPS51, VPS52, VPS53 and VPS54 subunits. Interacts with SNAP29.

Its subcellular location is the golgi apparatus. The protein localises to the trans-Golgi network. In terms of biological role, acts as a component of endosomal retrieval machinery that is involved in protein transport from early endosomes to either recycling endosomes or the trans-Golgi network. Mediates the recruitment of Golgi-associated retrograde protein (GARP) complex to the trans-Golgi network and controls early endosome-to-Golgi transport of internalized protein. Promotes the recycling of internalized transferrin receptor (TFRC) to the plasma membrane through interaction with endosome-associated recycling protein (EARP) complex. Controls proper insulin distribution and secretion, and retention of cargo in mature dense core vesicles. Required for the stability of the endosome-associated retrograde protein (EARP) complex subunits and for proper localization and association of EARP with membranes. The chain is EARP and GARP complex-interacting protein 1 from Macaca fascicularis (Crab-eating macaque).